Reading from the N-terminus, the 424-residue chain is O-methyltransferase aunD (424 aa).

An S-adenosyl-L-methionine-binding site is contributed by Asp275. His326 acts as the Proton acceptor in catalysis.

This sequence belongs to the class I-like SAM-binding methyltransferase superfamily. Cation-independent O-methyltransferase family.

It functions in the pathway secondary metabolite biosynthesis. In terms of biological role, O-methyltransferase; part of the gene cluster that mediates the biosynthesis of aurasperone B, a dimeric gamma-naphthopyrone. The first step in the biosynthesis of aurasperone B is the production of gamma-naphthopyrone precursor YWA1 by the non-reducing polyketide synthase albA, via condensation of one acetyl-CoA starter unit with 6 malonyl-CoA units. YWA1 is then methylated by aunE at position C-6 to yield foncesin which is further methylated at position C-8 by aunD to produce fonsecin B. A key enzyme in the biosynthetic pathway is the cytochrome P450 monooxygenase aunB which catalyzes the oxidative dimerization of fonsecin B to aurasperone B. AunB also catalyzes the oxidative dimerization of rubrofusarin B into aurasperone A. In Aspergillus niger (strain ATCC MYA-4892 / CBS 513.88 / FGSC A1513), this protein is O-methyltransferase aunD.